The following is a 235-amino-acid chain: Octanoyltransferase (235 aa).

The 188-residue stretch at 44–231 (DTTADELWLV…HQVGLPNENN (188 aa)) folds into the BPL/LPL catalytic domain. Residues 83-90 (RGGQVTYH), 150-152 (SLG), and 163-165 (GLA) each bind substrate. C181 (acyl-thioester intermediate) is an active-site residue.

This sequence belongs to the LipB family.

The protein resides in the cytoplasm. It catalyses the reaction octanoyl-[ACP] + L-lysyl-[protein] = N(6)-octanoyl-L-lysyl-[protein] + holo-[ACP] + H(+). It participates in protein modification; protein lipoylation via endogenous pathway; protein N(6)-(lipoyl)lysine from octanoyl-[acyl-carrier-protein]: step 1/2. Functionally, catalyzes the transfer of endogenously produced octanoic acid from octanoyl-acyl-carrier-protein onto the lipoyl domains of lipoate-dependent enzymes. Lipoyl-ACP can also act as a substrate although octanoyl-ACP is likely to be the physiological substrate. The sequence is that of Octanoyltransferase from Colwellia psychrerythraea (strain 34H / ATCC BAA-681) (Vibrio psychroerythus).